We begin with the raw amino-acid sequence, 432 residues long: MNYNANVVKFHSTILHKFALKISKFLILCMRRNKRQLACMKCQCENPMAAITYADIEYPHNTHFLLLDSISWIPCTCKILKLKEFELPDRFDIPNLFYDGWLSYVFHTFSGVYLKIGYEMDESGFCLPDQVYHLIDNHSCIQTAVSHLLRNHQALFKYLCDYLRSGEFPLTVLIHHVMLYQYYPKSLQEALWAAVEHYVNNSGEAYSTVQKLAVQKKIGNIRMYLVNPRDIFALGSTCNCIVVSSSNFQSYVQLRKPLLENNLPYEIDGFDKILQCANSEADIGWIAMIHCIGSNGYAFPIHLYLNMKKNIFLGKLPESTLLLYNSDGAIFKNPPSSKKECDFYNQLLLDLCKCRQFNAEMECNMKKLFNNPTGLHSLPNLPNFSEAGSAKSSNFCSSKDNCLTNRLTLNCLDTPSDENGEDIAIQLIIPAE.

Belongs to the UPF0300 family.

The protein resides in the cytoplasm. The protein localises to the cell cortex. Functionally, has a role in meiosis. The sequence is that of Meiotically up-regulated gene 134 protein (mug134) from Schizosaccharomyces pombe (strain 972 / ATCC 24843) (Fission yeast).